The sequence spans 417 residues: MAEIKNYTLNFGPQHPAAHGVLRLVLELDGEVIQRADPHIGLLHRATEKLAESKTFIQSVPYMDRLDYVSMMVNEHGYVLAIERLLGIDVPERAQYIRVLFDEITRVLNHLMWIGAHALDVGAMAVFLYAFREREDLMDVYEAVSGARMHAAYYRPGGVYRDLPDAMPQYKASKIRNEKALARMNEARSGSVLDFIDDFFTRFPKCVDEYETLLTDNRIWKQRLVGIGVVSPERALQMGLTGPMLRGSGIAWDLRKKQPYEVYDRMDFDVPVGVNGDCYDRYLVRVEEMRQSIRIAKQCIEWLRKNPGPVMTDNHKVAPPSRVGMKTNMEDLIHHFKLFTEGFHVPEGEAYAAVEHPKGEFGIYLVSDGANKPYRLKIRAPGFAHLASLDEMARGHMIADAVTIIGTQDIVFGEIDR.

This sequence belongs to the complex I 49 kDa subunit family. As to quaternary structure, NDH-1 is composed of 14 different subunits. Subunits NuoB, C, D, E, F, and G constitute the peripheral sector of the complex.

It localises to the cell inner membrane. It catalyses the reaction a quinone + NADH + 5 H(+)(in) = a quinol + NAD(+) + 4 H(+)(out). Functionally, NDH-1 shuttles electrons from NADH, via FMN and iron-sulfur (Fe-S) centers, to quinones in the respiratory chain. The immediate electron acceptor for the enzyme in this species is believed to be ubiquinone. Couples the redox reaction to proton translocation (for every two electrons transferred, four hydrogen ions are translocated across the cytoplasmic membrane), and thus conserves the redox energy in a proton gradient. In Burkholderia ambifaria (strain ATCC BAA-244 / DSM 16087 / CCUG 44356 / LMG 19182 / AMMD) (Burkholderia cepacia (strain AMMD)), this protein is NADH-quinone oxidoreductase subunit D.